The chain runs to 153 residues: Cytochrome c-type biogenesis protein CcmE (153 aa).

The Cytoplasmic segment spans residues 1–6 (MNARRR). The chain crosses the membrane as a helical; Signal-anchor for type II membrane protein span at residues 7-27 (LWSLLMLILAVGTAATLTIMA). The Periplasmic segment spans residues 28–153 (LRRNLTYLYM…LDTPIAQTTP (126 aa)). Positions 121 and 125 each coordinate heme. A compositionally biased stretch (polar residues) spans 130-141 (LTNKMQPTPTQH). A disordered region spans residues 130–153 (LTNKMQPTPTQHTHLDTPIAQTTP).

The protein belongs to the CcmE/CycJ family.

Its subcellular location is the cell inner membrane. In terms of biological role, heme chaperone required for the biogenesis of c-type cytochromes. Transiently binds heme delivered by CcmC and transfers the heme to apo-cytochromes in a process facilitated by CcmF and CcmH. The polypeptide is Cytochrome c-type biogenesis protein CcmE (Xylella fastidiosa (strain 9a5c)).